A 441-amino-acid polypeptide reads, in one-letter code: Platelet-activating factor acetylhydrolase (441 aa).

The N-terminal stretch at 1–21 (MVPPKLHVLFCLCGCLAVVYP) is a signal peptide. Ser273 (nucleophile) is an active-site residue. Active-site charge relay system residues include Asp296 and His351. Residues Asn423 and Asn433 are each glycosylated (N-linked (GlcNAc...) asparagine).

Belongs to the AB hydrolase superfamily. Lipase family. Post-translationally, N-glycosylated. Macrophage-derived PLA2G7 carries sialylated complex-type N-glycans that hinder its binding to HDL particles. Plasma. Secreted by macrophages (at protein level).

The protein resides in the secreted. It is found in the extracellular space. It catalyses the reaction a 1-O-alkyl-2-acetyl-sn-glycero-3-phosphocholine + H2O = a 1-O-alkyl-sn-glycero-3-phosphocholine + acetate + H(+). The catalysed reaction is 1-O-decyl-2-acetyl-sn-glycero-3-phosphocholine + H2O = 1-O-decyl-sn-glycero-3-phosphocholine + acetate + H(+). The enzyme catalyses 1-O-dodecyl-2-acetyl-sn-glycero-3-phosphocholine + H2O = 1-O-dodecyl-sn-glycero-3-phosphocholine + acetate + H(+). It carries out the reaction 1-O-tetradecyl-2-acetyl-sn-glycero-3-phosphocholine + H2O = 1-O-tetradecyl-sn-glycero-3-phosphocholine + acetate + H(+). It catalyses the reaction 1-O-hexadecyl-2-acetyl-sn-glycero-3-phosphocholine + H2O = 1-O-hexadecyl-sn-glycero-3-phosphocholine + acetate + H(+). The catalysed reaction is 1-O-octadecyl-2-acetyl-sn-glycero-3-phosphocholine + H2O = 1-O-octadecyl-sn-glycero-3-phosphocholine + acetate + H(+). The enzyme catalyses 1-hexadecanoyl-2-acetyl-sn-glycero-3-phosphocholine + H2O = 1-hexadecanoyl-sn-glycero-3-phosphocholine + acetate + H(+). It carries out the reaction 1-hexadecanoyl-2-propionyl-sn-glycero-3-phosphocholine + H2O = propanoate + 1-hexadecanoyl-sn-glycero-3-phosphocholine + H(+). It catalyses the reaction 1-hexadecanoyl-2-butanoyl-sn-glycero-3-phosphocholine + H2O = butanoate + 1-hexadecanoyl-sn-glycero-3-phosphocholine + H(+). The catalysed reaction is 1-hexadecanoyl-2-pentanoyl-sn-glycero-3-phosphocholine + H2O = pentanoate + 1-hexadecanoyl-sn-glycero-3-phosphocholine + H(+). The enzyme catalyses 1-hexadecanoyl-2-glutaroyl-sn-glycero-3-phosphocholine + H2O = glutarate + 1-hexadecanoyl-sn-glycero-3-phosphocholine + H(+). It carries out the reaction 1-hexadecanoyl-2-(5-oxopentanoyl)-sn-glycero-3-phosphocholine + H2O = 5-oxopentanoate + 1-hexadecanoyl-sn-glycero-3-phosphocholine + H(+). It catalyses the reaction 1-hexadecanoyl-2-(9-oxononanoyl)-sn-glycero-3-phosphocholine + H2O = 9-oxononanoate + 1-hexadecanoyl-sn-glycero-3-phosphocholine + H(+). The catalysed reaction is 1-hexadecanoyl-2-[9-hydroperoxy-(10E-octadecenoyl)]-sn-glycero-3-phosphocholine + H2O = 9-hydroperoxy-10E-octadecenoate + 1-hexadecanoyl-sn-glycero-3-phosphocholine + H(+). The enzyme catalyses 1-hexadecanoyl-2-(10-hydroperoxy-8E-octadecenoyl)-sn-glycero-3-phosphocholine + H2O = 10-hydroperoxy-(8E)-octadecenoate + 1-hexadecanoyl-sn-glycero-3-phosphocholine + H(+). Functionally, lipoprotein-associated calcium-independent phospholipase A2 involved in phospholipid catabolism during inflammatory and oxidative stress response. At the lipid-aqueous interface, hydrolyzes the ester bond of fatty acyl group attached at sn-2 position of phospholipids (phospholipase A2 activity). Specifically targets phospholipids with a short-chain fatty acyl group at sn-2 position. Can hydrolyze phospholipids with long fatty acyl chains, only if they carry oxidized functional groups. Hydrolyzes and inactivates platelet-activating factor (PAF, 1-O-alkyl-2-acetyl-sn-glycero-3-phosphocholine), a potent pro-inflammatory signaling lipid that acts through PTAFR on various innate immune cells. Hydrolyzes oxidatively truncated phospholipids carrying an aldehyde group at omega position, preventing their accumulation in low-density lipoprotein (LDL) particles and uncontrolled pro-inflammatory effects. As part of high-density lipoprotein (HDL) particles, can hydrolyze phospholipids having long-chain fatty acyl hydroperoxides at sn-2 position and protect against potential accumulation of these oxylipins in the vascular wall. Catalyzes the release from membrane phospholipids of F2-isoprostanes, lipid biomarkers of cellular oxidative damage. The chain is Platelet-activating factor acetylhydrolase (PLA2G7) from Homo sapiens (Human).